Reading from the N-terminus, the 429-residue chain is Ribosomal RNA small subunit methyltransferase B (429 aa).

S-adenosyl-L-methionine-binding positions include 254-260 (CAAPGGK), Asp-277, Asp-303, and Asp-322. The Nucleophile role is filled by Cys-375.

It belongs to the class I-like SAM-binding methyltransferase superfamily. RsmB/NOP family.

It is found in the cytoplasm. The enzyme catalyses cytidine(967) in 16S rRNA + S-adenosyl-L-methionine = 5-methylcytidine(967) in 16S rRNA + S-adenosyl-L-homocysteine + H(+). Specifically methylates the cytosine at position 967 (m5C967) of 16S rRNA. This is Ribosomal RNA small subunit methyltransferase B from Escherichia coli O6:H1 (strain CFT073 / ATCC 700928 / UPEC).